The primary structure comprises 457 residues: Secreted effector kinase SteC (457 aa).

Lys-256 lines the ATP pocket.

It belongs to the protein kinase superfamily. Autophosphorylated.

It localises to the secreted. The protein resides in the host cytoplasm. Functionally, effector proteins function to alter host cell physiology and promote bacterial survival in host tissues. This protein is a kinase, which is required for SPI-2 T3SS-dependent F-actin meshwork formation in infected host cells. This chain is Secreted effector kinase SteC (steC), found in Salmonella typhimurium (strain LT2 / SGSC1412 / ATCC 700720).